The sequence spans 165 residues: Protein SprT (165 aa).

The region spanning 19–163 is the SprT-like domain; the sequence is REKLAQANLK…RCVKCGEPLV (145 aa). H78 contacts Zn(2+). The active site involves E79. Residue H82 coordinates Zn(2+).

The protein belongs to the SprT family. Requires Zn(2+) as cofactor.

It localises to the cytoplasm. The chain is Protein SprT from Enterobacter sp. (strain 638).